Here is a 186-residue protein sequence, read N- to C-terminus: C-type lectin 37Da (186 aa).

The signal sequence occupies residues 1–20 (MLKTLVQLFLVVAGFAPGFG). N-linked (GlcNAc...) asparagine glycosylation is found at Asn35 and Asn47. The C-type lectin domain maps to 46–169 (INESYYVFGQ…CHNHASSLFK (124 aa)). Cys140 and Cys160 are disulfide-bonded.

It localises to the secreted. In terms of biological role, galactose-specific lectin that displays calcium-dependent activity. Binds to the surface of hemocytes and enhances hemocyte encapsulation and melanization. This is likely by interacting with carbohydrates on the surface of the hemocytes. Also displays agglutination activity against the Gram-negative bacterium E.coli. The polypeptide is C-type lectin 37Da (Drosophila melanogaster (Fruit fly)).